The primary structure comprises 551 residues: Interleukin-2 receptor subunit beta (551 aa).

An N-terminal signal peptide occupies residues 1 to 26 (MAAPALSWRLPLLILLLPLATSWASA). Topologically, residues 27–240 (AVNGTSQFTC…TKPAALGKDT (214 aa)) are extracellular. Residues Asn-29, Asn-43, and Asn-71 are each glycosylated (N-linked (GlcNAc...) asparagine). Cystine bridges form between Cys-36-Cys-46, Cys-59-Cys-110, and Cys-74-Cys-86. The 101-residue stretch at 134–234 (APISLQVVHV…QPLAFRTKPA (101 aa)) folds into the Fibronectin type-III domain. Asn-149 carries N-linked (GlcNAc...) asparagine glycosylation. The WSXWS motif motif lies at 220–224 (WSPWS). Residues 241–265 (IPWLGHLLVGLSGAFGFIILVYLLI) traverse the membrane as a helical segment. The Cytoplasmic portion of the chain corresponds to 266–551 (NCRNTGPWLK…LQGQDPTHLV (286 aa)). The Box 1 motif motif lies at 278-286 (LKCNTPDPS). 2 disordered regions span residues 389–416 (EEDPDEGVAGAPTGSSPQPLQPLSGEDD) and 432–486 (PSLL…VDFQ).

Belongs to the type I cytokine receptor family. Type 4 subfamily. In terms of assembly, non-covalent dimer of an alpha and a beta subunit. IL2R exists in 3 different forms: a high affinity dimer, an intermediate affinity monomer (beta subunit), and a low affinity monomer (alpha subunit). The high and intermediate affinity forms also associate with a gamma subunit. Interacts with SHB upon interleukin stimulation. (Microbial infection) Interacts with HTLV-1 accessory protein p12I.

Its subcellular location is the cell membrane. In terms of biological role, receptor for interleukin-2. This beta subunit is involved in receptor mediated endocytosis and transduces the mitogenic signals of IL2. Probably in association with IL15RA, involved in the stimulation of neutrophil phagocytosis by IL15. This is Interleukin-2 receptor subunit beta from Homo sapiens (Human).